Here is a 245-residue protein sequence, read N- to C-terminus: Transmembrane and ubiquitin-like domain-containing protein 1 (245 aa).

The segment at 2 to 30 is required to release iHOPS from membranes; the sequence is ALIEGVGDEVTVLFSVLACLLVLALAWVS. Residues 11–31 form a helical membrane-spanning segment; that stretch reads VTVLFSVLACLLVLALAWVST. Over residues 34-51 the composition is skewed to polar residues; the sequence is TESTDPLPQSSGTTTPAQ. A disordered region spans residues 34–100; that stretch reads TESTDPLPQS…ASTPPDSPQE (67 aa). 3 positions are modified to phosphoserine: S73, S97, and S126. Positions 102-175 constitute a Ubiquitin-like domain; sequence LLLRLKFLND…LHCHVSTRVG (74 aa). The next 2 helical transmembrane spans lie at 194–214 and 219–239; these read IGSLLLPLLLLLLLLLWYCQI and FFPLTATLGLAGFTLLLSLLA.

In terms of assembly, interacts with EEF1A1, GRIA2, GRIP1. Interacts with CAMLG, TUBG1. Interacts with NPM1 and CDKN2A; TMUB1 can enhance interaction between NPM1 and CDKN2A and is proposed to bridge the proteins; proposed to be mediated by iHOPS. Interacts with ERLIN2 and AMFR; TMUB1 promotes the interaction of ERLIN2 with AMFR. Processed by regulated intramembrane proteolysis (RIP) in the N-terminus to release iHOPS from membranes.

Its subcellular location is the membrane. It is found in the postsynaptic cell membrane. The protein localises to the recycling endosome. The protein resides in the cytoplasm. It localises to the cytoskeleton. Its subcellular location is the microtubule organizing center. It is found in the centrosome. The protein localises to the nucleus. The protein resides in the nucleolus. Involved in sterol-regulated ubiquitination and degradation of HMG-CoA reductase HMGCR. Involved in positive regulation of AMPA-selective glutamate receptor GRIA2 recycling to the cell surface. Acts as a negative regulator of hepatocyte growth during regeneration. In terms of biological role, may contribute to the regulation of translation during cell-cycle progression. May contribute to the regulation of cell proliferation. May be involved in centrosome assembly. Modulates stabilization and nucleolar localization of tumor suppressor CDKN2A and enhances association between CDKN2A and NPM1. In Rattus norvegicus (Rat), this protein is Transmembrane and ubiquitin-like domain-containing protein 1 (Tmub1).